The chain runs to 34 residues: Photosystem I reaction center subunit XII (34 aa).

A helical membrane pass occupies residues 4–24 (VLSAPEVFIALVVAAHAAVLA).

This sequence belongs to the PsaM family.

The protein localises to the cellular thylakoid membrane. This is Photosystem I reaction center subunit XII from Synechococcus sp. (strain CC9605).